A 185-amino-acid chain; its full sequence is Ribosome-recycling factor (185 aa).

This sequence belongs to the RRF family.

The protein localises to the cytoplasm. Responsible for the release of ribosomes from messenger RNA at the termination of protein biosynthesis. May increase the efficiency of translation by recycling ribosomes from one round of translation to another. The sequence is that of Ribosome-recycling factor from Alkalilimnicola ehrlichii (strain ATCC BAA-1101 / DSM 17681 / MLHE-1).